The primary structure comprises 543 residues: Hydroxylamine reductase (543 aa).

[4Fe-4S] cluster-binding residues include cysteine 3, cysteine 6, cysteine 15, and cysteine 21. The hybrid [4Fe-2O-2S] cluster site is built by histidine 239, glutamate 263, cysteine 307, cysteine 398, cysteine 426, cysteine 451, glutamate 486, and lysine 488. Cysteine 398 is subject to Cysteine persulfide.

The protein belongs to the HCP family. [4Fe-4S] cluster is required as a cofactor. It depends on hybrid [4Fe-2O-2S] cluster as a cofactor.

The protein localises to the cytoplasm. It carries out the reaction A + NH4(+) + H2O = hydroxylamine + AH2 + H(+). Catalyzes the reduction of hydroxylamine to form NH(3) and H(2)O. The sequence is that of Hydroxylamine reductase from Methanococcus vannielii (strain ATCC 35089 / DSM 1224 / JCM 13029 / OCM 148 / SB).